Here is a 69-residue protein sequence, read N- to C-terminus: Disintegrin EMF10A (69 aa).

The 66-residue stretch at 1-66 (MNSANPCCDP…DCPRNPWKSE (66 aa)) folds into the Disintegrin domain. 4 disulfide bridges follow: Cys-7–Cys-30, Cys-21–Cys-27, Cys-26–Cys-51, and Cys-39–Cys-58. The short motif at 43–45 (RGD) is the Cell attachment site element.

The protein belongs to the disintegrin family. Dimeric disintegrin subfamily. In terms of assembly, heterodimer with EMF10B; disulfide-linked. Expressed by the venom gland.

The protein localises to the secreted. Functionally, extremely potent and selective inhibitor of integrin alpha-5/beta-1 (ITGA5/ITGB1). Partially inhibits adhesion of cells expressing alpha-IIb/beta-3 (ITGA2B/ITGB3), alpha-V/beta-3 (ITGAV/ITGB3), and alpha-4/beta-1 (ITGA4/ITGB1) to appropriate ligands only at concentration higher than 500 nM. Weakly inhibits ADP-induced platelet aggregation. The sequence is that of Disintegrin EMF10A from Eristicophis macmahoni (Leaf-nosed viper).